Reading from the N-terminus, the 309-residue chain is L-aminoadipate-semialdehyde dehydrogenase-phosphopantetheinyl transferase (309 aa).

CoA-binding positions include arginine 47, 86–91, and 108–111; these read RTSKGK and NISH. 2 residues coordinate Mg(2+): aspartate 129 and glutamate 181. CoA is bound at residue 181–185; the sequence is ESFIK.

The protein belongs to the P-Pant transferase superfamily. AcpS family. Monomer. The cofactor is Mg(2+).

It is found in the cytoplasm. The protein localises to the cytosol. It catalyses the reaction apo-[ACP] + CoA = holo-[ACP] + adenosine 3',5'-bisphosphate + H(+). The enzyme catalyses apo-[ACP] + acetyl-CoA = acetyl-[ACP] + adenosine 3',5'-bisphosphate + H(+). Its function is as follows. Catalyzes the post-translational modification of target proteins by phosphopantetheine. Can transfer the 4'-phosphopantetheine moiety from coenzyme A, regardless of whether the CoA is presented in the free thiol form or as an acetyl thioester, to a serine residue of a broad range of acceptors including the acyl carrier domain of FASN. In Mus musculus (Mouse), this protein is L-aminoadipate-semialdehyde dehydrogenase-phosphopantetheinyl transferase (Aasdhppt).